The primary structure comprises 233 residues: Short chain dehydrogenase trt9 (233 aa).

NADP(+) is bound by residues Asp33, Arg95, Tyr127, Lys131, and Val160. Catalysis depends on Tyr127, which acts as the Proton donor. The active-site Lowers pKa of active site Tyr is the Lys131.

The protein belongs to the short-chain dehydrogenases/reductases (SDR) family.

It functions in the pathway secondary metabolite biosynthesis; terpenoid biosynthesis. Functionally, short chain dehydrogenase; part of the gene cluster that mediates the biosynthesis of terretonin, a fungal meroterpenoid that acts as a mycotoxin. The first step of the pathway is the synthesis of 3,5-dimethylorsellinic acid (DMOA) by the polyketide synthase trt4. DMOA is then prenylated into farnesyl-DMOA by the polyprenyl transferase trt2. Methylation by the methyltransferase trt5 then leads to farnesyl-DMOA methyl ester which is further subject to epoxidation by the FAD-dependent monooxygenase trt8 to yield epoxyfarnesyl-DMOA methyl ester. Cyclization of epoxyfarnesyl-DMOA methyl ester by the terpene cyclase trt1 leads to a tetracycle intermediate which is in turn converted to preterretonin. Dehydrogenase trt9 comes next to transform preterretonin to preterrenoid. The FAD-dependent monooxygenase trt3 is then required for the C-hydroxylation at C16 of preterrenoid to yield terrenoid. The cytochrome P450 trt6 catalyzes three successive oxidations to transform terrenoid into an unstable intermediate, which then undergoes the D-ring expansion and unusual rearrangement of the methoxy group to afford the core skeleton of terretonin. Trt14 catalyzes the D-ring expansion of terretonin involving intramolecular methoxy rearrangement as well as the hydrolysis of the expanded D-ring and the methyl ester moiety. Finally, the nonheme iron-dependent dioxygenase trt7 accomplishes the last two oxidation reactions steps to complete the biosynthesis of terretonin. Terretonin C is produced via spontaneous decarboxylation of the terretonin precursor. Another shunt product of the terretonin biosynthesis is dihydrofarnesyl-DMOA, derived from epoxyfarnesyl-DMOA through hydrolysis of the epoxide. The polypeptide is Short chain dehydrogenase trt9 (Aspergillus terreus (strain NIH 2624 / FGSC A1156)).